A 276-amino-acid chain; its full sequence is uncharacterized protein (276 aa).

To E.cuniculi ECU05_1600/ECU11_0130.

This is an uncharacterized protein from Encephalitozoon cuniculi (strain GB-M1) (Microsporidian parasite).